Consider the following 878-residue polypeptide: Alanine--tRNA ligase (878 aa).

4 residues coordinate Zn(2+): His-567, His-571, Cys-669, and His-673.

Belongs to the class-II aminoacyl-tRNA synthetase family. Zn(2+) serves as cofactor.

Its subcellular location is the cytoplasm. It catalyses the reaction tRNA(Ala) + L-alanine + ATP = L-alanyl-tRNA(Ala) + AMP + diphosphate. In terms of biological role, catalyzes the attachment of alanine to tRNA(Ala) in a two-step reaction: alanine is first activated by ATP to form Ala-AMP and then transferred to the acceptor end of tRNA(Ala). Also edits incorrectly charged Ser-tRNA(Ala) and Gly-tRNA(Ala) via its editing domain. This Rickettsia conorii (strain ATCC VR-613 / Malish 7) protein is Alanine--tRNA ligase.